A 592-amino-acid chain; its full sequence is Potassium-transporting ATPase potassium-binding subunit (592 aa).

Helical transmembrane passes span 7 to 27, 71 to 91, 136 to 156, 179 to 199, 287 to 307, 314 to 334, 411 to 431, 449 to 469, 473 to 493, 515 to 535, and 559 to 579; these read LQTV…GTFM, VLFN…QHLL, GLTV…IAVI, LYIL…QGVI, LEIL…GAMV, WTLL…LQGV, GLYT…LMIG, SVVT…IAMI, AVAA…YAFA, ILGA…VLAM, and FALW…FPAL.

The protein belongs to the KdpA family. As to quaternary structure, the system is composed of three essential subunits: KdpA, KdpB and KdpC.

It is found in the cell inner membrane. Its function is as follows. Part of the high-affinity ATP-driven potassium transport (or Kdp) system, which catalyzes the hydrolysis of ATP coupled with the electrogenic transport of potassium into the cytoplasm. This subunit binds the periplasmic potassium ions and delivers the ions to the membrane domain of KdpB through an intramembrane tunnel. The protein is Potassium-transporting ATPase potassium-binding subunit of Geobacter sulfurreducens (strain ATCC 51573 / DSM 12127 / PCA).